A 219-amino-acid polypeptide reads, in one-letter code: Ribose-5-phosphate isomerase A (219 aa).

Substrate is bound by residues 28–31 (SGST), 81–84 (DGAD), and 94–97 (KGGG). Glu-103 acts as the Proton acceptor in catalysis. A substrate-binding site is contributed by Lys-121.

It belongs to the ribose 5-phosphate isomerase family. Homodimer.

The enzyme catalyses aldehydo-D-ribose 5-phosphate = D-ribulose 5-phosphate. It participates in carbohydrate degradation; pentose phosphate pathway; D-ribose 5-phosphate from D-ribulose 5-phosphate (non-oxidative stage): step 1/1. Functionally, catalyzes the reversible conversion of ribose-5-phosphate to ribulose 5-phosphate. This is Ribose-5-phosphate isomerase A from Haemophilus influenzae (strain ATCC 51907 / DSM 11121 / KW20 / Rd).